Here is a 33-residue protein sequence, read N- to C-terminus: Photosystem II reaction center protein Psb30 (33 aa).

Residues V5–L25 traverse the membrane as a helical segment.

It belongs to the Psb30/Ycf12 family. PSII is composed of 1 copy each of membrane proteins PsbA, PsbB, PsbC, PsbD, PsbE, PsbF, PsbH, PsbI, PsbJ, PsbK, PsbL, PsbM, PsbT, PsbX, PsbY, PsbZ, Psb30/Ycf12, peripheral proteins of the oxygen-evolving complex and a large number of cofactors. It forms dimeric complexes.

It localises to the plastid. It is found in the chloroplast thylakoid membrane. Its function is as follows. A core subunit of photosystem II (PSII), probably helps stabilize the reaction center. In Physcomitrium patens (Spreading-leaved earth moss), this protein is Photosystem II reaction center protein Psb30.